The primary structure comprises 729 residues: Neurochondrin (729 aa).

Position 2 is an N-acetylserine (S2). Phosphoserine is present on S2. The residue at position 2 (S2) is an N-acetylalanine. S-palmitoyl cysteine attachment occurs at residues C3 and C4. Asymmetric dimethylarginine is present on R75. Phosphoserine is present on S448.

It belongs to the neurochondrin family. In terms of assembly, interacts with MCHR1. Interacts with SEMA4C. Interacts with DIAPH1 (via FH3 domain). Interacts with GRM5. In terms of processing, palmitoylated. Palmitoylation by ZDHHC1, ZDHHC3 and ZDHHC11 regulates the association of NCDN with endosome membranes. May also be palmitoylated by ZDHHC7. Abundantly expressed in whole adult brain and in all individual brain regions examined, including spinal cord. Weakly expressed in ovary, testis, fetal brain and small intestine.

It is found in the cytoplasm. Its subcellular location is the cytosol. The protein resides in the endosome membrane. It localises to the cell projection. The protein localises to the dendrite. It is found in the postsynapse. Probably involved in signal transduction in the nervous system, via increasing cell surface localization of GRM5/mGluR5 and positively regulating its signaling. Required for the spatial learning process. Acts as a negative regulator of Ca(2+)-calmodulin-dependent protein kinase 2 (CaMK2) phosphorylation. May play a role in modulating melanin-concentrating hormone-mediated functions via its interaction with MCHR1 that interferes with G protein-coupled signal transduction. May be involved in bone metabolism. May also be involved in neurite outgrowth. In Homo sapiens (Human), this protein is Neurochondrin.